The following is a 413-amino-acid chain: Protein cycle (413 aa).

Positions 1 to 43 (MEVQEFCENMEEIEDENYDEEKSARTSDENRKQNHSEIEKRRR) are disordered. Over residues 8-19 (ENMEEIEDENYD) the composition is skewed to acidic residues. Positions 20 to 41 (EEKSARTSDENRKQNHSEIEKR) are enriched in basic and acidic residues. Residues 30-83 (NRKQNHSEIEKRRRDKMNTYINELSSMIPMCFAMQRKLDKLTVLRMAVQHLRGI) enclose the bHLH domain. Residues 104-175 (DQELKMIILQ…EQLSSLEQCP (72 aa)) form the PAS 1 domain. Positions 219–242 (NQIKEESDTSSSSRSSTKRKSRLT) are disordered. The 71-residue stretch at 297 to 367 (PASLDNHPNI…ESHKMVMQVP (71 aa)) folds into the PAS 2 domain. A PAC domain is found at 372-413 (TQVYRFRCKDNSYIQLQSEWRAFKNPWTSEIDYIIAKNSVFL).

Efficient DNA binding requires dimerization with another bHLH protein. Forms a heterodimer with Clock in order to activate PER and TIM transcription. As to expression, expressed in head and ovary.

The protein resides in the nucleus. Its function is as follows. Putative transcription factor involved in the generation of biological rhythms. Activates cycling transcription of Period (PER) and Timeless (TIM) by binding to the E-box (5'-CACGTG-3') present in their promoters. This chain is Protein cycle (cyc), found in Drosophila melanogaster (Fruit fly).